The chain runs to 200 residues: MRGKFITFEGIDGAGKSTHIEWVAERLRARANVVTTREPGGTPLGEDLRQLLLHRKMHLETEALLMFAARREHIAEVIEPALARGDWVISDRFTDATFAYQGGGRGLALDRLATLEQWVQSGLQPDLTLLFDVPLETASARLAGAREPDKFEAESRAFFERTRTEYLRRAAEAPQRFRVIDATRSIDEIRVALEEIIATL.

10-17 (GIDGAGKS) provides a ligand contact to ATP.

The protein belongs to the thymidylate kinase family.

It carries out the reaction dTMP + ATP = dTDP + ADP. Phosphorylation of dTMP to form dTDP in both de novo and salvage pathways of dTTP synthesis. The protein is Thymidylate kinase of Cupriavidus metallidurans (strain ATCC 43123 / DSM 2839 / NBRC 102507 / CH34) (Ralstonia metallidurans).